A 313-amino-acid chain; its full sequence is CRISPR-associated endonuclease Cas1 1 (313 aa).

Mn(2+) contacts are provided by glutamate 144, histidine 211, and aspartate 224. Positions 288-313 are disordered; that stretch reads PPLDAPEAVDPVIPPEEPSGDDGHRG.

This sequence belongs to the CRISPR-associated endonuclease Cas1 family. In terms of assembly, homodimer, forms a heterotetramer with a Cas2 homodimer. Mg(2+) is required as a cofactor. The cofactor is Mn(2+).

In terms of biological role, CRISPR (clustered regularly interspaced short palindromic repeat), is an adaptive immune system that provides protection against mobile genetic elements (viruses, transposable elements and conjugative plasmids). CRISPR clusters contain spacers, sequences complementary to antecedent mobile elements, and target invading nucleic acids. CRISPR clusters are transcribed and processed into CRISPR RNA (crRNA). Acts as a dsDNA endonuclease. Involved in the integration of spacer DNA into the CRISPR cassette. The protein is CRISPR-associated endonuclease Cas1 1 of Rhodospirillum rubrum (strain ATCC 11170 / ATH 1.1.1 / DSM 467 / LMG 4362 / NCIMB 8255 / S1).